A 305-amino-acid chain; its full sequence is Peroxisome assembly protein 26 (305 aa).

The disordered stretch occupies residues 1 to 20 (MKSDSSTSAAPLRGLGGPLR). The Cytoplasmic portion of the chain corresponds to 1–246 (MKSDSSTSAA…RQLWDSAVSH (246 aa)). Residues 247–267 (FFSLPFKKSLLAALILCLLVV) traverse the membrane as a helical; Signal-anchor for type II membrane protein segment. At 268–305 (RFDPASPSSLHFLYKLAQLFRWIRKAAFSRLYQLRIRD) the chain is on the peroxisomal matrix side.

This sequence belongs to the peroxin-26 family. As to quaternary structure, interacts (via its cytoplasmic domain) with PEX6; interaction is direct and is ATP-dependent. Interacts with PEX1; interaction is indirect and is mediated via interaction with PEX6. Widely expressed. Highly expressed in kidney, liver, brain and skeletal muscles. Expressed at intermediate level in pancreas, placenta and heart. Weakly expressed in lung.

The protein localises to the peroxisome membrane. Functionally, peroxisomal docking factor that anchors PEX1 and PEX6 to peroxisome membranes. PEX26 is therefore required for the formation of the PEX1-PEX6 AAA ATPase complex, a complex that mediates the extraction of the PEX5 receptor from peroxisomal membrane. In Homo sapiens (Human), this protein is Peroxisome assembly protein 26.